Consider the following 115-residue polypeptide: NTF2-related export protein 1 (115 aa).

Residues 7–115 enclose the NTF2 domain; sequence YAQEFVQRYY…LVLRSSTNFL (109 aa).

The protein resides in the nucleus. Its function is as follows. Stimulator of protein export for NES-containing proteins. Also plays a role in mRNA nuclear export. The sequence is that of NTF2-related export protein 1 (nxt1) from Schizosaccharomyces pombe (strain 972 / ATCC 24843) (Fission yeast).